The following is a 255-amino-acid chain: tRNA (guanine-N(7)-)-methyltransferase (255 aa).

Over residues 1 to 11 (MSISDNSRDQL) the composition is skewed to basic and acidic residues. Residues 1–25 (MSISDNSRDQLGELPAGRPLQSDFD) are disordered. Residues glutamate 83, glutamate 108, aspartate 135, and aspartate 158 each coordinate S-adenosyl-L-methionine. Residue aspartate 158 is part of the active site. Lysine 162 serves as a coordination point for substrate. The interaction with RNA stretch occupies residues 164–169 (RHNKRR). Substrate contacts are provided by residues aspartate 194 and 232 to 235 (TKFE).

The protein belongs to the class I-like SAM-binding methyltransferase superfamily. TrmB family.

The enzyme catalyses guanosine(46) in tRNA + S-adenosyl-L-methionine = N(7)-methylguanosine(46) in tRNA + S-adenosyl-L-homocysteine. It participates in tRNA modification; N(7)-methylguanine-tRNA biosynthesis. Catalyzes the formation of N(7)-methylguanine at position 46 (m7G46) in tRNA. This is tRNA (guanine-N(7)-)-methyltransferase from Corynebacterium glutamicum (strain ATCC 13032 / DSM 20300 / JCM 1318 / BCRC 11384 / CCUG 27702 / LMG 3730 / NBRC 12168 / NCIMB 10025 / NRRL B-2784 / 534).